Consider the following 151-residue polypeptide: uncharacterized protein (151 aa).

The protein to equivalent protein in phage 82.

This is an uncharacterized protein from Escherichia coli (strain K12).